A 436-amino-acid chain; its full sequence is GTPase Der (436 aa).

2 EngA-type G domains span residues Pro4 to Pro167 and Val176 to Ala351. GTP is bound by residues Gly10 to Ser17, Asp57 to Ile61, Asn119 to Asp122, Gly182 to Ser189, Asp229 to Met233, and Asn294 to Asp297. The region spanning Met352 to Lys436 is the KH-like domain.

It belongs to the TRAFAC class TrmE-Era-EngA-EngB-Septin-like GTPase superfamily. EngA (Der) GTPase family. In terms of assembly, associates with the 50S ribosomal subunit.

GTPase that plays an essential role in the late steps of ribosome biogenesis. This chain is GTPase Der, found in Bacillus pumilus (strain SAFR-032).